The chain runs to 742 residues: Serine/threonine-protein kinase SKY1 (742 aa).

The interval 13–146 (KSAHLADTST…KDYRPGGYHP (134 aa)) is disordered. The span at 19-35 (DTSTDASISCEEATSSQ) shows a compositional bias: polar residues. Positions 56–73 (TKSKLSLALQTSKSSSSA) are enriched in low complexity. Basic and acidic residues predominate over residues 81 to 101 (TSSKTEDFSTKSIKKKPDSGV). A compositionally biased stretch (low complexity) spans 106 to 127 (SIQSDSGPQSDSDLDSDSSISS). Residues 128-140 (CDERNEESLKDYR) show a composition bias toward basic and acidic residues. A Protein kinase domain is found at 158 to 706 (YILVRKLGWG…AGGLVNHPWL (549 aa)). Residues 164–172 (LGWGHFSTV) and K187 contribute to the ATP site. The Proton acceptor role is filled by D294. 2 positions are modified to phosphothreonine: T383 and T386. Phosphoserine occurs at positions 388, 393, 410, 427, 432, 445, 449, and 453. Positions 459–491 (INEDSNDNNNNDNSKNKNNNNNNSNNNNNEDIM) are disordered. Low complexity predominate over residues 465 to 489 (DNNNNDNSKNKNNNNNNSNNNNNED).

It belongs to the protein kinase superfamily. Ser/Thr protein kinase family.

It carries out the reaction L-seryl-[protein] + ATP = O-phospho-L-seryl-[protein] + ADP + H(+). The enzyme catalyses L-threonyl-[protein] + ATP = O-phospho-L-threonyl-[protein] + ADP + H(+). Its function is as follows. Constitutively active kinase, specifically and sequentially phosphorylates serine/arginine (SR)-type shuttling mRNA binding proteins in their RS dipeptide repeats. This is Serine/threonine-protein kinase SKY1 (SKY1) from Saccharomyces cerevisiae (strain ATCC 204508 / S288c) (Baker's yeast).